Consider the following 104-residue polypeptide: Large ribosomal subunit protein uL24 (104 aa).

It belongs to the universal ribosomal protein uL24 family. As to quaternary structure, part of the 50S ribosomal subunit.

Functionally, one of two assembly initiator proteins, it binds directly to the 5'-end of the 23S rRNA, where it nucleates assembly of the 50S subunit. In terms of biological role, one of the proteins that surrounds the polypeptide exit tunnel on the outside of the subunit. This Nitrobacter winogradskyi (strain ATCC 25391 / DSM 10237 / CIP 104748 / NCIMB 11846 / Nb-255) protein is Large ribosomal subunit protein uL24.